The chain runs to 95 residues: Sec-independent protein translocase protein TatA (95 aa).

The helical transmembrane segment at 1-21 threads the bilayer; it reads MFGRLGAPEIILILVVIILLF. Residues 44-55 show a composition bias toward basic and acidic residues; that stretch reads AKAMKSEAKADD. A disordered region spans residues 44–95; sequence AKAMKSEAKADDAAPADPPNPEQSAAQRTIQAAPGDVTSSRPVTEPTDTTKR.

The protein belongs to the TatA/E family. As to quaternary structure, the Tat system comprises two distinct complexes: a TatABC complex, containing multiple copies of TatA, TatB and TatC subunits, and a separate TatA complex, containing only TatA subunits. Substrates initially bind to the TatABC complex, which probably triggers association of the separate TatA complex to form the active translocon.

The protein resides in the cell membrane. In terms of biological role, part of the twin-arginine translocation (Tat) system that transports large folded proteins containing a characteristic twin-arginine motif in their signal peptide across membranes. TatA could form the protein-conducting channel of the Tat system. The protein is Sec-independent protein translocase protein TatA of Streptomyces coelicolor (strain ATCC BAA-471 / A3(2) / M145).